The primary structure comprises 1480 residues: MQRSPLEKASVVSKLFFSWTRPILKKGYRQRLELSDIYQIPSADSADNLSEKLEREWDRELASKKNPKLINALRRCFFWRFMFYGIFLYLGEVTKAVQPLLLGRIIASYDPDNKEERSIAIYLGIGLCLLFIVRTLLLHPAIFGLHHIGMQMRIAMFSLIYKKTLKLSSRVLDKISIGQLVSLLSNNLNKFDEGLALAHFVWIAPLQVALLMGLIWELLQASAFCGLGFLIVLALFQAGLGRMMMKYRDQRAGKINERLVITSEMIENIQSVKAYCWEEAMEKMIENLRQTELKLTRKAAYVRYFNSSAFFFSGFFVVFLSVLPYALIKGIVLRKIFTTISFCIVLRMAVTRQFPWAVQTWYDSLGAINKIQDFLQKQEYKTLEYNLTTTEVVMENVTAFWEEGFGELFEKAKQNNNNRETSNGDDSLFFSNFSLLGTPVLKDINFKIERGQLLAVAGSTGAGKTSLLMMIMGELEPSEGKIKHSGRISFCSQFSWIMPGTIKENIIFGVSYDEYRYRSVIKACQLEEDISKFAEKDNIVLGEGGITLSGGQRARISLARAVYKDADLYLLDSPFGYLDVLTEKEIFESCVCKLMANKTRILVTSKMEHLKKADKILILHEGSSYFYGTFSELQNLRPDFSSKLMGCDSFDQFSAERRNSILTETLRRFSLEGDAPVSWTETKKQPFKQTGEFGEKRKNSILNPINSIRKFSIVQKTPLQMNGIEEDSDEPFERRVSLVPDSEQGEAILPRISVISTGPMLQARRRQSVLNLMTQSVNQGQNIHRKTTASTRKVSLAPQANLTELDIYSRRLSQETGLEISEEINEEDLKECFFDDMESIPAVTTWNTYLRYITVHKSLIFVLIWCLVIFLAEVAASLVVLWLLGNTPLQDKGNSTHSRNNSYAVIITSTSSYYVFYIYVGVADTLLAMGFFRGLPLVHTLITVSKILHNKMLHSVLQAPMSTLNTLKAGGILNRFSKDIAILDDLLPLTIFDFIQLLLIVIGAIAVVAVLQPYIFVATVPVIVAFIMLRAYFLQTSQQLKQLESEGRSPIFTHLVTSLKGLWTLRAFGRQPYFETLFHKALNLHTANWFLYLSTLRWFQMRIEMIFVIFFIAVTFISILTTGEGEGRVGIILTLAMNIMSTLQWAVNSSIDVDSLMRSVSRVFKFIDMPTEGKPTKSTKPYKNGQLSKLMIIENSHVKKDDIWPSGGQMTVKDLTAKYTEGGNAILENISFSISPGQRVGLLGRTGSGKSTLLSAFLRLLNTEGEIQIDGVSWDSITLQQWRKAFGVIPQKVFIFSGTFRKNLDPYEQWSDQEIWKVADEVGLRSVIEQFPGKLDFVLVDGGCVLSHGHKQLMCLARSVLSKAKILLLDEPSAHLDPVTYQIIRRTLKQAFADCTVILCEHRIEAMLECQQFLVIEENKVRQYDSIQKLLNERSLFQQAISPSDRVKLFPHRNSSKCKSKPQIAALKEETEEEVQDTRL.

The Cytoplasmic portion of the chain corresponds to Met1–Phe77. A helical membrane pass occupies residues Phe78–Gln98. The ABC transmembrane type-1 1 domain occupies Phe81 to Leu365. The Extracellular portion of the chain corresponds to Pro99–Tyr122. The helical transmembrane segment at Leu123–His146 threads the bilayer. Residues His147–Leu195 lie on the Cytoplasmic side of the membrane. The helical transmembrane segment at Ala196–Trp216 threads the bilayer. The Extracellular segment spans residues Glu217–Ser222. Residues Ala223 to Met243 form a helical membrane-spanning segment. The Cytoplasmic segment spans residues Met244–Lys298. A helical membrane pass occupies residues Ala299 to Phe319. Over Leu320–Thr339 the chain is Extracellular. Residues Ile340–Val358 form a helical membrane-spanning segment. The Cytoplasmic portion of the chain corresponds to Gln359–Ser858. ATP contacts are provided by residues Trp401, Ser434, Gly458–Thr465, and Gln493. Positions Asn423 to Gly646 constitute an ABC transporter 1 domain. Residue Cys524 is the site of S-palmitoyl cysteine attachment. Phosphoserine is present on residues Ser549 and Ser660. Residues Ser654–Glu831 are disordered R region. Residue Ser670 is modified to Phosphoserine; by PKA. Lys688 is covalently cross-linked (Glycyl lysine isopeptide (Lys-Gly) (interchain with G-Cter in ubiquitin)). Phosphoserine is present on residues Ser700 and Ser712. The residue at position 717 (Thr717) is a Phosphothreonine. Residues Ser737, Ser753, Ser768, Ser790, Ser795, and Ser813 each carry the phosphoserine modification. A helical membrane pass occupies residues Leu859–Val879. The ABC transmembrane type-1 2 domain maps to Leu859 to Ser1155. The Extracellular portion of the chain corresponds to Val880 to Ile918. Asn894 and Asn900 each carry an N-linked (GlcNAc...) asparagine glycan. The discontinuously helical transmembrane segment at Tyr919–His939 threads the bilayer. Topologically, residues Thr940–Thr990 are cytoplasmic. The helical transmembrane segment at Ile991–Leu1011 threads the bilayer. The Extracellular segment spans residues Gln1012–Pro1013. A helical membrane pass occupies residues Tyr1014–Leu1034. Residues Gln1035–Thr1095 are Cytoplasmic-facing. The chain crosses the membrane as a helical span at residues Leu1096 to Phe1116. Residues Ile1117–Gly1130 lie on the Extracellular side of the membrane. Residues Ile1131–Ile1151 traverse the membrane as a helical segment. Residues Asp1152 to Leu1480 lie on the Cytoplasmic side of the membrane. Residues Met1210–Pro1443 form the ABC transporter 2 domain. ATP-binding positions include Tyr1219 and Gly1244 to Ser1251. The interaction with GORASP2 stretch occupies residues Arg1386–Leu1480. Cys1395 carries the S-palmitoyl cysteine lipid modification. Ser1444 and Ser1456 each carry phosphoserine. The interval His1452–Leu1480 is disordered. Over residues Glu1470 to Leu1480 the composition is skewed to acidic residues. The PDZ-binding signature appears at Thr1478–Leu1480.

This sequence belongs to the ABC transporter superfamily. ABCC family. CFTR transporter (TC 3.A.1.202) subfamily. Monomer; does not require oligomerization for channel activity. May form oligomers in the membrane. Interacts with SLC26A3, SLC26A6 and NHERF1. Interacts with SHANK2. Interacts with MYO6. Interacts (via C-terminus) with GOPC (via PDZ domain); this promotes CFTR internalization and thereby decreases channel activity. Interacts with SLC4A7 through NHERF1. Found in a complex with MYO5B and RAB11A. Interacts with ANO1. Interacts with SLC26A8. Interacts with AHCYL1; the interaction increases CFTR activity. Interacts with CSE1L. The core-glycosylated form interacts with GORASP2 (via PDZ GRASP-type 1 domain) in respone to ER stress. Interacts with MARCHF2; the interaction leads to CFTR ubiqtuitination and degradation. Interacts with ADGRG2. Post-translationally, N-glycosylated. Phosphorylated; cAMP treatment promotes phosphorylation and activates the channel. Dephosphorylation decreases the ATPase activity (in vitro). Phosphorylation at PKA sites activates the channel. Phosphorylation at PKC sites enhances the response to phosphorylation by PKA. Phosphorylated by AMPK; this inhibits channel activity. In terms of processing, ubiquitinated, leading to its degradation in the lysosome. Deubiquitination by USP10 in early endosomes enhances its endocytic recycling to the cell membrane. Ubiquitinated by RNF185 during ER stress. Ubiquitinated by MARCHF2.

The protein localises to the apical cell membrane. Its subcellular location is the early endosome membrane. It localises to the cell membrane. The protein resides in the recycling endosome membrane. It is found in the endoplasmic reticulum membrane. The protein localises to the nucleus. It catalyses the reaction ATP + H2O + closed Cl(-) channel = ADP + phosphate + open Cl(-) channel.. The enzyme catalyses chloride(in) = chloride(out). It carries out the reaction hydrogencarbonate(in) = hydrogencarbonate(out). The catalysed reaction is ATP + H2O = ADP + phosphate + H(+). In terms of biological role, epithelial ion channel that plays an important role in the regulation of epithelial ion and water transport and fluid homeostasis. Mediates the transport of chloride ions across the cell membrane. Possesses an intrinsic ATPase activity and utilizes ATP to gate its channel; the passive flow of anions through the channel is gated by cycles of ATP binding and hydrolysis by the ATP-binding domains. The ion channel is also permeable to HCO(3)(-); selectivity depends on the extracellular chloride concentration. Exerts its function also by modulating the activity of other ion channels and transporters. Contributes to the regulation of the pH and the ion content of the epithelial fluid layer. Modulates the activity of the epithelial sodium channel (ENaC) complex, in part by regulating the cell surface expression of the ENaC complex. May regulate bicarbonate secretion and salvage in epithelial cells by regulating the transporter SLC4A7. Can inhibit the chloride channel activity of ANO1. Plays a role in the chloride and bicarbonate homeostasis during sperm epididymal maturation and capacitation. This Pongo abelii (Sumatran orangutan) protein is Cystic fibrosis transmembrane conductance regulator.